A 93-amino-acid polypeptide reads, in one-letter code: uncharacterized protein (93 aa).

The protein resides in the plastid. Its subcellular location is the chloroplast. This is an uncharacterized protein from Diacronema lutheri (Unicellular marine alga).